The following is a 452-amino-acid chain: Cobyrinate a,c-diamide synthase (452 aa).

In terms of domain architecture, GATase cobBQ-type spans 248–441 (RVAYALDAAF…LHIHFYQNLA (194 aa)). Residue cysteine 330 is the Nucleophile of the active site.

The protein belongs to the CobB/CbiA family. It depends on Mg(2+) as a cofactor.

It carries out the reaction cob(II)yrinate + 2 L-glutamine + 2 ATP + 2 H2O = cob(II)yrinate a,c diamide + 2 L-glutamate + 2 ADP + 2 phosphate + 2 H(+). The protein operates within cofactor biosynthesis; adenosylcobalamin biosynthesis; cob(II)yrinate a,c-diamide from sirohydrochlorin (anaerobic route): step 10/10. Functionally, catalyzes the ATP-dependent amidation of the two carboxylate groups at positions a and c of cobyrinate, using either L-glutamine or ammonia as the nitrogen source. This is Cobyrinate a,c-diamide synthase from Listeria monocytogenes serovar 1/2a (strain ATCC BAA-679 / EGD-e).